Consider the following 76-residue polypeptide: Vasotab (76 aa).

Residues 1-20 form the signal peptide; it reads MKFALFSVLVVLLIATFVAA. Residues 21–76 enclose the Kazal-like domain; it reads DECPRICTADYRPVCGTPSGGRRSANRTFGNQCSLNAHNCLNKGDTYDKLHDGECK. Cystine bridges form between cysteine 23–cysteine 60, cysteine 27–cysteine 53, and cysteine 35–cysteine 75.

As to expression, expressed by the salivary gland.

It is found in the secreted. Functionally, vasodilator protein that inhibits vasoconstriction of isolated rat femoral artery induced by phenylephrine. Since platelet aggregation and vasoconstriction are key hemostatic responses, particularly in small wounds, this protein likely participates in the antihemostatic responses during blood feeding. Blocks L-type calcium channels (Cav1/CACNA1) in left ventricular myocytes isolated from rat hearts. The protein is Vasotab of Hybomitra bimaculata (Horse fly).